The following is a 397-amino-acid chain: Serpin B10 (397 aa).

A Nuclear localization signal motif is present at residues 74 to 77; that stretch reads KKRK.

This sequence belongs to the serpin family. Ov-serpin subfamily.

Its subcellular location is the nucleus. The protein resides in the cytoplasm. Protease inhibitor that may play a role in the regulation of protease activities during hematopoiesis and apoptosis induced by TNF. May regulate protease activities in the cytoplasm and in the nucleus. This Sorex araneus (Eurasian common shrew) protein is Serpin B10 (SERPINB10).